The primary structure comprises 180 residues: Calcium-binding protein E (180 aa).

4 EF-hand domains span residues 3–38, 40–76, 85–120, and 139–174; these read KVEA…NSNI, DPLA…KKIK, ALRS…DPDF, and RAKS…HPEF. Positions 16, 18, 20, 22, and 27 each coordinate Ca(2+). 9 residues coordinate Ca(2+): D98, D100, D102, E109, D152, D154, N156, K158, and E163.

The sequence is that of Calcium-binding protein E (cbpE) from Dictyostelium discoideum (Social amoeba).